Reading from the N-terminus, the 200-residue chain is Small ribosomal subunit protein eS8A (200 aa).

Disordered regions lie at residues 1 to 40 (MGIT…RIGP) and 123 to 145 (SKGK…KHSA). The span at 135-145 (KSKHVQRKHSA) shows a compositional bias: basic residues.

The protein belongs to the eukaryotic ribosomal protein eS8 family. In terms of assembly, component of the small ribosomal subunit (SSU). Mature yeast ribosomes consist of a small (40S) and a large (60S) subunit. The 40S small subunit contains 1 molecule of ribosomal RNA (18S rRNA) and at least 33 different proteins. The large 60S subunit contains 3 rRNA molecules (25S, 5.8S and 5S rRNA) and at least 46 different proteins.

It localises to the cytoplasm. Component of the ribosome, a large ribonucleoprotein complex responsible for the synthesis of proteins in the cell. The small ribosomal subunit (SSU) binds messenger RNAs (mRNAs) and translates the encoded message by selecting cognate aminoacyl-transfer RNA (tRNA) molecules. The large subunit (LSU) contains the ribosomal catalytic site termed the peptidyl transferase center (PTC), which catalyzes the formation of peptide bonds, thereby polymerizing the amino acids delivered by tRNAs into a polypeptide chain. The nascent polypeptides leave the ribosome through a tunnel in the LSU and interact with protein factors that function in enzymatic processing, targeting, and the membrane insertion of nascent chains at the exit of the ribosomal tunnel. The protein is Small ribosomal subunit protein eS8A (rps801) of Schizosaccharomyces pombe (strain 972 / ATCC 24843) (Fission yeast).